We begin with the raw amino-acid sequence, 452 residues long: Type II methyltransferase M.EcaI (452 aa).

Belongs to the N(4)/N(6)-methyltransferase family.

The catalysed reaction is a 2'-deoxyadenosine in DNA + S-adenosyl-L-methionine = an N(6)-methyl-2'-deoxyadenosine in DNA + S-adenosyl-L-homocysteine + H(+). A beta subtype methylase, recognizes the double-stranded sequence 5'-GGTNACC-3', methylates A-5 on both strands and protects the DNA from cleavage by the EcaI endonuclease. This Enterobacter cloacae protein is Type II methyltransferase M.EcaI (ecaIM).